The following is a 696-amino-acid chain: Elongation factor G (696 aa).

Residues 8–290 enclose the tr-type G domain; sequence ERYRNIGISA…KVIELMPAPT (283 aa). GTP-binding positions include 17–24, 88–92, and 142–145; these read AHIDAGKT, DTPGH, and NKMD.

Belongs to the TRAFAC class translation factor GTPase superfamily. Classic translation factor GTPase family. EF-G/EF-2 subfamily.

It localises to the cytoplasm. Catalyzes the GTP-dependent ribosomal translocation step during translation elongation. During this step, the ribosome changes from the pre-translocational (PRE) to the post-translocational (POST) state as the newly formed A-site-bound peptidyl-tRNA and P-site-bound deacylated tRNA move to the P and E sites, respectively. Catalyzes the coordinated movement of the two tRNA molecules, the mRNA and conformational changes in the ribosome. The chain is Elongation factor G from Thiobacillus denitrificans (strain ATCC 25259 / T1).